The chain runs to 82 residues: MLRALRRRFKPAGDERRREENVVLCPRCYFVAPGSISVADYTRMHIKFNEQFADECSNNLAVTQPKTWFNYTNCPLLYYSLC.

This is an uncharacterized protein from Orgyia pseudotsugata multicapsid polyhedrosis virus (OpMNPV).